The primary structure comprises 1464 residues: MGARNSVLRGKKADELERIRLRPGGKKKYRLKHIVWAANKLDRFGLAESLLESKEGCQKILTVLDPMVPTGSENLKSLFNTVCVIWCIHAEEKVKDTEGAKQIVRRHLVAETGTAEKMPSTSRPTAPSSEKGGNYPVQHVGGNYTHIPLSPRTLNAWVKLVEEKKFGAEVVPGFQALSEGCTPYDINQMLNCVGDHQAAMQIIREIINEEAAEWDVQHPIPGPLPAGQLREPRGSDIAGTTSTVEEQIQWMFRPQNPVPVGNIYRRWIQIGLQKCVRMYNPTNILDIKQGPKEPFQSYVDRFYKSLRAEQTDPAVKNWMTQTLLVQNANPDCKLVLKGLGMNPTLEEMLTACQGVGGPGQKARLMAEALKEVIGPAPIPFAAAQQRKAFKCWNCGKEGHSARQCRAPRRQGCWKCGKPGHIMTNCPDRQAGFLRTGPLGKEAPQLPRGPSSAGADTNSTPSGSSSGSTGEIYAAREKTERAERETIQGSDRGLTAPRAGGDTIQGATNRGLAAPQFSLWKRPVVTAYIEGQPVEVLLDTGADDSIVAGIELGNNYSPKIVGGIGGFINTKEYKNVEIEVLNKKVRATIMTGDTPINIFGRNILTALGMSLNLPVAKVEPIKIMLKPGKDGPKLRQWPLTKEKIEALKEICEKMEKEGQLEEAPPTNPYNTPTFAIKKKDKNKWRMLIDFRELNKVTQDFTEIQLGIPHPAGLAKKRRITVLDVGDAYFSIPLHEDFRPYTAFTLPSVNNAEPGKRYIYKVLPQGWKGSPAIFQHTMRQVLEPFRKANKDVIIIQYMDDILIASDRTDLEHDRVVLQLKELLNGLGFSTPDEKFQKDPPYHWMGYELWPTKWKLQKIQLPQKEIWTVNDIQKLVGVLNWAAQLYPGIKTKHLCRLIRGKMTLTEEVQWTELAEAELEENRIILSQEQEGHYYQEEKELEATVQKDQENQWTYKIHQEEKILKVGKYAKVKNTHTNGIRLLAQVVQKIGKEALVIWGRIPKFHLPVEREIWEQWWDNYWQVTWIPDWDFVSTPPLVRLAFNLVGDPIPGAETFYTDGSCNRQSKEGKAGYVTDRGKDKVKKLEQTTNQQAELEAFAMALTDSGPKVNIIVDSQYVMGISASQPTESESKIVNQIIEEMIKKEAIYVAWVPAHKGIGGNQEVDHLVSQGIRQVLFLEKIEPAQEEHEKYHSNVKELSHKFGIPNLVARQIVNSCAQCQQKGEAIHGQVNAELGTWQMDCTHLEGKIIIVAVHVASGFIEAEVIPQESGRQTALFLLKLASRWPITHLHTDNGANFTSQEVKMVAWWIGIEQSFGVPYNPQSQGVVEAMNHHLKNQISRIREQANTIETIVLMAIHCMNFKRRGGIGDMTPSERLINMITTEQEIQFLQAKNSKLKDFRVYFREGRDQLWKGPGELLWKGEGAVLVKVGTDIKIIPRRKAKIIRDYGGRQEMDSGSHLEGAREDGEMA.

A lipid anchor (N-myristoyl glycine; by host) is attached at G2. Residues 7–31 (VLRGKKADELERIRLRPGGKKKYRL) form an interaction with Gp41 region. A Nuclear export signal motif is present at residues 16 to 22 (LERIRLR). The short motif at 26 to 32 (KKKYRLK) is the Nuclear localization signal element. The segment at 111-136 (ETGTAEKMPSTSRPTAPSSEKGGNYP) is disordered. The segment covering 119–128 (PSTSRPTAPS) has biased composition (polar residues). Residue Y135 is modified to Phosphotyrosine; by host. The segment at 191–228 (NCVGDHQAAMQIIREIINEEAAEWDVQHPIPGPLPAGQ) is interaction with human PPIA/CYPA and NUP153. The dimerization/Multimerization of capsid protein p24 stretch occupies residues 279–365 (YNPTNILDIK…GGPGQKARLM (87 aa)). 2 CCHC-type zinc fingers span residues 389–406 (FKCWNCGKEGHSARQCRA) and 410–427 (QGCWKCGKPGHIMTNCPD). The disordered stretch occupies residues 432–500 (FLRTGPLGKE…RGLTAPRAGG (69 aa)). Low complexity predominate over residues 456–469 (TNSTPSGSSSGSTG). The span at 473 to 485 (AAREKTERAERET) shows a compositional bias: basic and acidic residues. A dimerization of protease region spans residues 514–518 (PQFSL). The 70-residue stretch at 533–602 (VEVLLDTGAD…TPINIFGRNI (70 aa)) folds into the Peptidase A2 domain. D538 (for protease activity; shared with dimeric partner) is an active-site residue. Dimerization of protease regions lie at residues 562–568 (GIGGFIN) and 601–613 (NILTALGMSLNLP). The 191-residue stretch at 656-846 (EGQLEEAPPT…PPYHWMGYEL (191 aa)) folds into the Reverse transcriptase domain. Mg(2+) is bound by residues D722, D797, and D798. Residues 839 to 847 (YHWMGYELW) are RT 'primer grip'. The short motif at 1009-1025 (WEQWWDNYWQVTWIPDW) is the Tryptophan repeat motif element. The RNase H type-1 domain maps to 1045 to 1168 (IPGAETFYTD…VDHLVSQGIR (124 aa)). Mg(2+) contacts are provided by D1054, E1089, D1109, and D1160. An Integrase-type zinc finger spans residues 1174–1215 (EKIEPAQEEHEKYHSNVKELSHKFGIPNLVARQIVNSCAQCQ). Residues H1183, H1187, C1211, and C1214 each contribute to the Zn(2+) site. Positions 1224–1375 (QVNAELGTWQ…TPSERLINMI (152 aa)) constitute an Integrase catalytic domain. 3 residues coordinate Mg(2+): D1235, D1287, and E1323. The segment at residues 1394 to 1441 (FRVYFREGRDQLWKGPGELLWKGEGAVLVKVGTDIKIIPRRKAKIIRD) is a DNA-binding region (integrase-type).

As to quaternary structure, homotrimer; further assembles as hexamers of trimers. Interacts with gp41 (via C-terminus). Interacts with host CALM1; this interaction induces a conformational change in the Matrix protein, triggering exposure of the myristate group. Interacts with host AP3D1; this interaction allows the polyprotein trafficking to multivesicular bodies during virus assembly. Part of the pre-integration complex (PIC) which is composed of viral genome, matrix protein, Vpr and integrase. Homodimer; the homodimer further multimerizes as homohexamers or homopentamers. Interacts with human PPIA/CYPA. Interacts with human NUP153. Interacts with host PDZD8; this interaction stabilizes the capsid. Interacts with monkey TRIM5; this interaction destabilizes the capsid. In terms of assembly, homodimer, whose active site consists of two apposed aspartic acid residues. As to quaternary structure, heterodimer of p66 RT and p51 RT (RT p66/p51). Heterodimerization of RT is essential for DNA polymerase activity. The overall folding of the subdomains is similar in p66 RT and p51 RT but the spatial arrangements of the subdomains are dramatically different. Homotetramer; may further associate as a homohexadecamer. Part of the pre-integration complex (PIC) which is composed of viral genome, matrix protein, Vpr and integrase. Interacts with human SMARCB1/INI1 and human PSIP1/LEDGF isoform 1. Interacts with human KPNA3; this interaction might play a role in nuclear import of the pre-integration complex. Interacts with human NUP153; this interaction might play a role in nuclear import of the pre-integration complex. Mg(2+) is required as a cofactor. Post-translationally, specific enzymatic cleavages by the viral protease yield mature proteins. The protease is released by autocatalytic cleavage. The polyprotein is cleaved during and after budding, this process is termed maturation. Proteolytic cleavage of p66 RT removes the RNase H domain to yield the p51 RT subunit. Nucleocapsid protein p7 might be further cleaved after virus entry.

It is found in the host cell membrane. It localises to the host endosome. The protein localises to the host multivesicular body. Its subcellular location is the virion membrane. The protein resides in the host nucleus. It is found in the host cytoplasm. It localises to the virion. The enzyme catalyses Endopeptidase for which the P1 residue is preferably hydrophobic.. It carries out the reaction Endohydrolysis of RNA in RNA/DNA hybrids. Three different cleavage modes: 1. sequence-specific internal cleavage of RNA. Human immunodeficiency virus type 1 and Moloney murine leukemia virus enzymes prefer to cleave the RNA strand one nucleotide away from the RNA-DNA junction. 2. RNA 5'-end directed cleavage 13-19 nucleotides from the RNA end. 3. DNA 3'-end directed cleavage 15-20 nucleotides away from the primer terminus.. It catalyses the reaction 3'-end directed exonucleolytic cleavage of viral RNA-DNA hybrid.. The catalysed reaction is DNA(n) + a 2'-deoxyribonucleoside 5'-triphosphate = DNA(n+1) + diphosphate. Protease: The viral protease is inhibited by many synthetic protease inhibitors (PIs), such as amprenavir, atazanavir, indinavir, loprinavir, nelfinavir, ritonavir and saquinavir. Use of protease inhibitors in tritherapy regimens permit more ambitious therapeutic strategies. Reverse transcriptase/ribonuclease H: RT can be inhibited either by nucleoside RT inhibitors (NRTIs) or by non nucleoside RT inhibitors (NNRTIs). NRTIs act as chain terminators, whereas NNRTIs inhibit DNA polymerization by binding a small hydrophobic pocket near the RT active site and inducing an allosteric change in this region. Classical NRTIs are abacavir, adefovir (PMEA), didanosine (ddI), lamivudine (3TC), stavudine (d4T), tenofovir (PMPA), zalcitabine (ddC), and zidovudine (AZT). Classical NNRTIs are atevirdine (BHAP U-87201E), delavirdine, efavirenz (DMP-266), emivirine (I-EBU), and nevirapine (BI-RG-587). The tritherapies used as a basic effective treatment of AIDS associate two NRTIs and one NNRTI. Functionally, mediates, with Gag polyprotein, the essential events in virion assembly, including binding the plasma membrane, making the protein-protein interactions necessary to create spherical particles, recruiting the viral Env proteins, and packaging the genomic RNA via direct interactions with the RNA packaging sequence (Psi). Gag-Pol polyprotein may regulate its own translation, by the binding genomic RNA in the 5'-UTR. At low concentration, the polyprotein would promote translation, whereas at high concentration, the polyprotein would encapsidate genomic RNA and then shut off translation. Targets the polyprotein to the plasma membrane via a multipartite membrane-binding signal, that includes its myristoylated N-terminus. Matrix protein is part of the pre-integration complex. Implicated in the release from host cell mediated by Vpu. Binds to RNA. In terms of biological role, forms the conical core that encapsulates the genomic RNA-nucleocapsid complex in the virion. Most core are conical, with only 7% tubular. The core is constituted by capsid protein hexamer subunits. The core is disassembled soon after virion entry. Host restriction factors such as TRIM5-alpha or TRIMCyp bind retroviral capsids and cause premature capsid disassembly, leading to blocks in reverse transcription. Capsid restriction by TRIM5 is one of the factors which restricts HIV-1 to the human species. Host PIN1 apparently facilitates the virion uncoating. On the other hand, interactions with PDZD8 or CYPA stabilize the capsid. Its function is as follows. Encapsulates and protects viral dimeric unspliced genomic RNA (gRNA). Binds these RNAs through its zinc fingers. Acts as a nucleic acid chaperone which is involved in rearangement of nucleic acid secondary structure during gRNA retrotranscription. Also facilitates template switch leading to recombination. As part of the polyprotein, participates in gRNA dimerization, packaging, tRNA incorporation and virion assembly. Functionally, aspartyl protease that mediates proteolytic cleavages of Gag and Gag-Pol polyproteins during or shortly after the release of the virion from the plasma membrane. Cleavages take place as an ordered, step-wise cascade to yield mature proteins. This process is called maturation. Displays maximal activity during the budding process just prior to particle release from the cell. Also cleaves Nef and Vif, probably concomitantly with viral structural proteins on maturation of virus particles. Hydrolyzes host EIF4GI and PABP1 in order to shut off the capped cellular mRNA translation. The resulting inhibition of cellular protein synthesis serves to ensure maximal viral gene expression and to evade host immune response. Multifunctional enzyme that converts the viral RNA genome into dsDNA in the cytoplasm, shortly after virus entry into the cell. This enzyme displays a DNA polymerase activity that can copy either DNA or RNA templates, and a ribonuclease H (RNase H) activity that cleaves the RNA strand of RNA-DNA heteroduplexes in a partially processive 3' to 5' endonucleasic mode. Conversion of viral genomic RNA into dsDNA requires many steps. A tRNA(3)-Lys binds to the primer-binding site (PBS) situated at the 5'-end of the viral RNA. RT uses the 3' end of the tRNA primer to perform a short round of RNA-dependent minus-strand DNA synthesis. The reading proceeds through the U5 region and ends after the repeated (R) region which is present at both ends of viral RNA. The portion of the RNA-DNA heteroduplex is digested by the RNase H, resulting in a ssDNA product attached to the tRNA primer. This ssDNA/tRNA hybridizes with the identical R region situated at the 3' end of viral RNA. This template exchange, known as minus-strand DNA strong stop transfer, can be either intra- or intermolecular. RT uses the 3' end of this newly synthesized short ssDNA to perform the RNA-dependent minus-strand DNA synthesis of the whole template. RNase H digests the RNA template except for two polypurine tracts (PPTs) situated at the 5'-end and near the center of the genome. It is not clear if both polymerase and RNase H activities are simultaneous. RNase H probably can proceed both in a polymerase-dependent (RNA cut into small fragments by the same RT performing DNA synthesis) and a polymerase-independent mode (cleavage of remaining RNA fragments by free RTs). Secondly, RT performs DNA-directed plus-strand DNA synthesis using the PPTs that have not been removed by RNase H as primers. PPTs and tRNA primers are then removed by RNase H. The 3' and 5' ssDNA PBS regions hybridize to form a circular dsDNA intermediate. Strand displacement synthesis by RT to the PBS and PPT ends produces a blunt ended, linear dsDNA copy of the viral genome that includes long terminal repeats (LTRs) at both ends. In terms of biological role, catalyzes viral DNA integration into the host chromosome, by performing a series of DNA cutting and joining reactions. This enzyme activity takes place after virion entry into a cell and reverse transcription of the RNA genome in dsDNA. The first step in the integration process is 3' processing. This step requires a complex comprising the viral genome, matrix protein, Vpr and integrase. This complex is called the pre-integration complex (PIC). The integrase protein removes 2 nucleotides from each 3' end of the viral DNA, leaving recessed CA OH's at the 3' ends. In the second step, the PIC enters cell nucleus. This process is mediated through integrase and Vpr proteins, and allows the virus to infect a non dividing cell. This ability to enter the nucleus is specific of lentiviruses, other retroviruses cannot and rely on cell division to access cell chromosomes. In the third step, termed strand transfer, the integrase protein joins the previously processed 3' ends to the 5' ends of strands of target cellular DNA at the site of integration. The 5'-ends are produced by integrase-catalyzed staggered cuts, 5 bp apart. A Y-shaped, gapped, recombination intermediate results, with the 5'-ends of the viral DNA strands and the 3' ends of target DNA strands remaining unjoined, flanking a gap of 5 bp. The last step is viral DNA integration into host chromosome. This involves host DNA repair synthesis in which the 5 bp gaps between the unjoined strands are filled in and then ligated. Since this process occurs at both cuts flanking the HIV genome, a 5 bp duplication of host DNA is produced at the ends of HIV-1 integration. Alternatively, Integrase may catalyze the excision of viral DNA just after strand transfer, this is termed disintegration. The protein is Gag-Pol polyprotein (gag-pol) of Homo sapiens (Human).